Reading from the N-terminus, the 99-residue chain is DNA-directed RNA polymerase subunit omega (99 aa).

The protein belongs to the RNA polymerase subunit omega family. The RNAP catalytic core consists of 2 alpha, 1 beta, 1 beta' and 1 omega subunit. When a sigma factor is associated with the core the holoenzyme is formed, which can initiate transcription.

It carries out the reaction RNA(n) + a ribonucleoside 5'-triphosphate = RNA(n+1) + diphosphate. In terms of biological role, promotes RNA polymerase assembly. Latches the N- and C-terminal regions of the beta' subunit thereby facilitating its interaction with the beta and alpha subunits. The protein is DNA-directed RNA polymerase subunit omega of Deinococcus deserti (strain DSM 17065 / CIP 109153 / LMG 22923 / VCD115).